The chain runs to 70 residues: Putative membrane protein insertion efficiency factor (70 aa).

It belongs to the UPF0161 family.

Its subcellular location is the cell inner membrane. Its function is as follows. Could be involved in insertion of integral membrane proteins into the membrane. The chain is Putative membrane protein insertion efficiency factor from Francisella tularensis subsp. tularensis (strain SCHU S4 / Schu 4).